The chain runs to 119 residues: Large ribosomal subunit protein uL22 (119 aa).

It belongs to the universal ribosomal protein uL22 family. As to quaternary structure, part of the 50S ribosomal subunit.

This protein binds specifically to 23S rRNA; its binding is stimulated by other ribosomal proteins, e.g. L4, L17, and L20. It is important during the early stages of 50S assembly. It makes multiple contacts with different domains of the 23S rRNA in the assembled 50S subunit and ribosome. In terms of biological role, the globular domain of the protein is located near the polypeptide exit tunnel on the outside of the subunit, while an extended beta-hairpin is found that lines the wall of the exit tunnel in the center of the 70S ribosome. The protein is Large ribosomal subunit protein uL22 of Rickettsia peacockii (strain Rustic).